The sequence spans 324 residues: Cysteine-rich repeat secretory protein 9 (324 aa).

Positions 1–27 (MARIIITLTIPLFYFFFFSLLSHQTMS) are cleaved as a signal peptide. Gnk2-homologous domains lie at 29-132 (PDHI…NVSF) and 138-248 (IVPS…TSVL). A disordered region spans residues 251–286 (PPPSPSAPPPRSPPPKSSPPSSLPQTPSPPLVFTPP).

The protein belongs to the cysteine-rich repeat secretory protein family.

The protein resides in the secreted. This chain is Cysteine-rich repeat secretory protein 9 (CRRSP9), found in Arabidopsis thaliana (Mouse-ear cress).